The sequence spans 426 residues: UDP-N-acetylmuramoylalanine--D-glutamate ligase (426 aa).

112–118 (GSVGKST) provides a ligand contact to ATP.

Belongs to the MurCDEF family.

It is found in the cytoplasm. The catalysed reaction is UDP-N-acetyl-alpha-D-muramoyl-L-alanine + D-glutamate + ATP = UDP-N-acetyl-alpha-D-muramoyl-L-alanyl-D-glutamate + ADP + phosphate + H(+). The protein operates within cell wall biogenesis; peptidoglycan biosynthesis. Its function is as follows. Cell wall formation. Catalyzes the addition of glutamate to the nucleotide precursor UDP-N-acetylmuramoyl-L-alanine (UMA). The chain is UDP-N-acetylmuramoylalanine--D-glutamate ligase from Thermosipho melanesiensis (strain DSM 12029 / CIP 104789 / BI429).